The primary structure comprises 587 residues: Aspartate--tRNA ligase (587 aa).

Glu174 contacts L-aspartate. An aspartate region spans residues 198–201 (QITK). Arg220 is a binding site for L-aspartate. Residues 220-222 (RDE) and Gln229 contribute to the ATP site. Residue His443 coordinates L-aspartate. Glu477 serves as a coordination point for ATP. Residue Arg484 participates in L-aspartate binding. 529-532 (GLDR) serves as a coordination point for ATP.

Belongs to the class-II aminoacyl-tRNA synthetase family. Type 1 subfamily. As to quaternary structure, homodimer.

The protein resides in the cytoplasm. It carries out the reaction tRNA(Asp) + L-aspartate + ATP = L-aspartyl-tRNA(Asp) + AMP + diphosphate. Catalyzes the attachment of L-aspartate to tRNA(Asp) in a two-step reaction: L-aspartate is first activated by ATP to form Asp-AMP and then transferred to the acceptor end of tRNA(Asp). The polypeptide is Aspartate--tRNA ligase (Streptococcus pneumoniae (strain Taiwan19F-14)).